A 294-amino-acid chain; its full sequence is MSWLRSCGERTAPALRGTYRILAGQSRFVNSSSHLQHTPLTVLQQEHGIRRIILNNPQQRNALSLPMIQSLQKDILHEADDPNLRVIIISAEGNVFSSGHNLKELTAEYGKDYHMEVFNTCAKLMTLFQTLPVPVIAEVNGLATAAGCQLVASCDIAVASDKSRFATPGVNVGLFCSTPGVALGRAVPRKVALEMLFTGEPISAHDALLHGLVSKVVPEENLKSETNRIALKICQTSHSVVALGKSTFYRQMAKSLTDAYKLTSEVMVENLAMKDGQEGLKSFIQKRKPVWTHS.

The N-terminal 61 residues, 1-61 (MSWLRSCGER…IILNNPQQRN (61 aa)), are a transit peptide targeting the mitochondrion.

The protein belongs to the enoyl-CoA hydratase/isomerase family.

It localises to the mitochondrion. Its function is as follows. May play a role in fatty acid biosynthesis and insulin sensitivity. The polypeptide is Enoyl-CoA hydratase domain-containing protein 3, mitochondrial (echdc3) (Xenopus laevis (African clawed frog)).